The sequence spans 276 residues: Homeobox protein TOS8 (276 aa).

Positions 176 to 185 (NSVRGSNNGY) are enriched in polar residues. Positions 176-199 (NSVRGSNNGYSAKEKKHKAHGKRS) are disordered. The span at 189–199 (EKKHKAHGKRS) shows a compositional bias: basic residues. Positions 194 to 256 (AHGKRSNLPK…NARRRKIFSG (63 aa)) form a DNA-binding region, homeobox; TALE-type.

The protein belongs to the TALE/CUP9 homeobox family.

Its subcellular location is the nucleus. The protein is Homeobox protein TOS8 (TOS8) of Saccharomyces cerevisiae (strain ATCC 204508 / S288c) (Baker's yeast).